The chain runs to 164 residues: Arginine repressor (164 aa).

Belongs to the ArgR family.

The protein localises to the cytoplasm. The protein operates within amino-acid biosynthesis; L-arginine biosynthesis [regulation]. Regulates arginine biosynthesis genes. The sequence is that of Arginine repressor from Mycolicibacterium paratuberculosis (strain ATCC BAA-968 / K-10) (Mycobacterium paratuberculosis).